Here is a 119-residue protein sequence, read N- to C-terminus: Large ribosomal subunit protein uL18 (119 aa).

It belongs to the universal ribosomal protein uL18 family. In terms of assembly, part of the 50S ribosomal subunit; part of the 5S rRNA/L5/L18/L25 subcomplex. Contacts the 5S and 23S rRNAs.

Functionally, this is one of the proteins that bind and probably mediate the attachment of the 5S RNA into the large ribosomal subunit, where it forms part of the central protuberance. This is Large ribosomal subunit protein uL18 from Clostridium tetani (strain Massachusetts / E88).